A 227-amino-acid polypeptide reads, in one-letter code: Izumo sperm-egg fusion protein 4 (227 aa).

An N-terminal signal peptide occupies residues 1–24 (MFGQGRLGQAMALLLFLGMTAALA). 2 N-linked (GlcNAc...) asparagine glycosylation sites follow: N153 and N214.

It belongs to the Izumo family.

It is found in the secreted. The protein is Izumo sperm-egg fusion protein 4 (Izumo4) of Mus musculus (Mouse).